We begin with the raw amino-acid sequence, 198 residues long: Patulin synthesis protein F (198 aa).

The signal sequence occupies residues 1-18 (MRLSTVLLGSLLGALTQA). Residues Asn-128 and Asn-184 are each glycosylated (N-linked (GlcNAc...) asparagine).

It belongs to the patF family.

The protein localises to the cytoplasm. The protein resides in the cytosol. The enzyme catalyses phyllostine = neopatulin. Its pathway is mycotoxin biosynthesis; patulin biosynthesis. Functionally, part of the gene cluster that mediates the biosynthesis of patulin, an acetate-derived tetraketide mycotoxin produced by several fungal species that shows antimicrobial properties against several bacteria. PatF catalyzes the conversion of phyllostine into neopatulin. The pathway begins with the synthesis of 6-methylsalicylic acid by the polyketide synthase (PKS) patK via condensation of acetate and malonate units. The 6-methylsalicylic acid decarboxylase patG then catalyzes the decarboxylation of 6-methylsalicylic acid to yield m-cresol (also known as 3-methylphenol). These first reactions occur in the cytosol. The intermediate m-cresol is then transported into the endoplasmic reticulum where the cytochrome P450 monooxygenase patH converts it to m-hydroxybenzyl alcohol, which is further converted to gentisyl alcohol by the cytochrome P450 monooxygenase patI. The oxidoreductases patJ and patO further convert gentisyl alcohol to isoepoxydon in the vacuole. PatN catalyzes then the transformation of isoepoxydon into phyllostine. The cluster protein patF is responsible for the conversion from phyllostine to neopatulin whereas the alcohol dehydrogenase patD converts neopatulin to E-ascladiol. The steps between isoepoxydon and E-ascladiol occur in the cytosol, and E-ascladiol is probably secreted to the extracellular space by one of the cluster-specific transporters patC or patM. Finally, the secreted patulin synthase patE catalyzes the conversion of E-ascladiol to patulin. This Aspergillus clavatus (strain ATCC 1007 / CBS 513.65 / DSM 816 / NCTC 3887 / NRRL 1 / QM 1276 / 107) protein is Patulin synthesis protein F.